The sequence spans 409 residues: S-adenosylmethionine synthase (409 aa).

141 to 146 lines the ATP pocket; the sequence is GQGSAD.

Belongs to the AdoMet synthase 2 family. Requires Mg(2+) as cofactor.

It carries out the reaction L-methionine + ATP + H2O = S-adenosyl-L-methionine + phosphate + diphosphate. The protein operates within amino-acid biosynthesis; S-adenosyl-L-methionine biosynthesis; S-adenosyl-L-methionine from L-methionine: step 1/1. Its function is as follows. Catalyzes the formation of S-adenosylmethionine from methionine and ATP. This Hyperthermus butylicus (strain DSM 5456 / JCM 9403 / PLM1-5) protein is S-adenosylmethionine synthase.